The primary structure comprises 417 residues: Pigment epithelium-derived factor (417 aa).

The N-terminal stretch at M1–S19 is a signal peptide. The disordered stretch occupies residues G17–E41. Residues S18 to G28 show a composition bias toward polar residues. Residue Q20 is modified to Pyrrolidone carboxylic acid. S24 is subject to Phosphoserine. An N-linked (GlcNAc...) asparagine glycan is attached at N284.

The protein belongs to the serpin family. As to quaternary structure, interacts with PNPLA2; this interaction stimulates the phospholipase A2 activity of PNPLA2. In terms of tissue distribution, highly expressed in the liver, gastric glandular mucosa and renal tubules. It is also expressed in the brain, heart, lung retina and testes.

It localises to the secreted. The protein resides in the melanosome. Its function is as follows. Neurotrophic protein; induces extensive neuronal differentiation in retinoblastoma cells. Potent inhibitor of angiogenesis. As it does not undergo the S (stressed) to R (relaxed) conformational transition characteristic of active serpins, it exhibits no serine protease inhibitory activity. In Mus musculus (Mouse), this protein is Pigment epithelium-derived factor (Serpinf1).